Reading from the N-terminus, the 577-residue chain is 2-succinyl-5-enolpyruvyl-6-hydroxy-3-cyclohexene-1-carboxylate synthase (577 aa).

It belongs to the TPP enzyme family. MenD subfamily. In terms of assembly, homodimer. Mg(2+) is required as a cofactor. Mn(2+) serves as cofactor. Requires thiamine diphosphate as cofactor.

The catalysed reaction is isochorismate + 2-oxoglutarate + H(+) = 5-enolpyruvoyl-6-hydroxy-2-succinyl-cyclohex-3-ene-1-carboxylate + CO2. Its pathway is quinol/quinone metabolism; 1,4-dihydroxy-2-naphthoate biosynthesis; 1,4-dihydroxy-2-naphthoate from chorismate: step 2/7. It functions in the pathway quinol/quinone metabolism; menaquinone biosynthesis. Its function is as follows. Catalyzes the thiamine diphosphate-dependent decarboxylation of 2-oxoglutarate and the subsequent addition of the resulting succinic semialdehyde-thiamine pyrophosphate anion to isochorismate to yield 2-succinyl-5-enolpyruvyl-6-hydroxy-3-cyclohexene-1-carboxylate (SEPHCHC). The chain is 2-succinyl-5-enolpyruvyl-6-hydroxy-3-cyclohexene-1-carboxylate synthase from Geobacillus kaustophilus (strain HTA426).